The chain runs to 1397 residues: DNA-directed RNA polymerase subunit beta' (1397 aa).

Zn(2+) contacts are provided by cysteine 75, cysteine 77, cysteine 90, and cysteine 93. Positions 465, 467, and 469 each coordinate Mg(2+). Zn(2+)-binding residues include cysteine 819, cysteine 893, cysteine 900, and cysteine 903.

It belongs to the RNA polymerase beta' chain family. The RNAP catalytic core consists of 2 alpha, 1 beta, 1 beta' and 1 omega subunit. When a sigma factor is associated with the core the holoenzyme is formed, which can initiate transcription. The cofactor is Mg(2+). Zn(2+) serves as cofactor.

It catalyses the reaction RNA(n) + a ribonucleoside 5'-triphosphate = RNA(n+1) + diphosphate. Its function is as follows. DNA-dependent RNA polymerase catalyzes the transcription of DNA into RNA using the four ribonucleoside triphosphates as substrates. The protein is DNA-directed RNA polymerase subunit beta' of Acinetobacter baumannii (strain SDF).